A 487-amino-acid polypeptide reads, in one-letter code: Reticulon-like protein B21 (487 aa).

Residues 1–22 are compositionally biased toward low complexity; it reads MTPRRSLSSSDSNDKSPSVSVV. Disordered regions lie at residues 1–43, 65–86, and 113–149; these read MTPR…PGRV, LRKVNSLPSPNSEKSDTKTEQE, and KSNENEQIDNGDQEIGDQDDYEEDGDEEEEREVEKKS. A compositionally biased stretch (basic and acidic residues) spans 26 to 38; that stretch reads ARSESVEGIEKKT. Positions 118-143 are enriched in acidic residues; sequence EQIDNGDQEIGDQDDYEEDGDEEEER. In terms of domain architecture, Reticulon spans 230-419; the sequence is LVDLVMWRDV…FTLVWNLSSV (190 aa). The next 4 helical transmembrane spans lie at 242 to 262, 264 to 284, 354 to 374, and 413 to 433; these read STLVFGFGTFLIISSSYANDL, FSFISVVAYMGLIYLGLMFVL, ITLWNLAKFGFLGAFTIPKIF, and VWNLSSVTARVWAAFMLLVAF. Over residues 446–463 the composition is skewed to acidic residues; it reads QADDDEDDNEEEEAEEEK. Residues 446–487 form a disordered region; it reads QADDDEDDNEEEEAEEEKEQVPPKHKRAPPHMMMPNKLKKIS.

It is found in the endoplasmic reticulum membrane. This chain is Reticulon-like protein B21 (RTNLB21), found in Arabidopsis thaliana (Mouse-ear cress).